Here is a 418-residue protein sequence, read N- to C-terminus: Ceramide synthase LAC1 (418 aa).

Polar residues predominate over residues Met1–Lys14. The segment at Met1–Ile25 is disordered. Ser2 carries the post-translational modification N-acetylserine. At Ser2–Arg81 the chain is on the cytoplasmic side. A compositionally biased stretch (basic residues) spans Val15 to Ser24. Phosphoserine occurs at positions 23 and 24. Residues His82–Gly102 form a helical membrane-spanning segment. N-linked (GlcNAc...) asparagine glycosylation occurs at Asn103. The Lumenal segment spans residues Asn103 to Ile130. The chain crosses the membrane as a helical span at residues Asn131–Ile155. The Cytoplasmic portion of the chain corresponds to Arg156 to Arg172. One can recognise a TLC domain in the interval His168–Arg385. 3 residues coordinate fumonisin B1: Arg169, Arg172, and Tyr182. A helical transmembrane segment spans residues Ile173–Met194. Over Tyr195–Pro217 the chain is Lumenal. The helical transmembrane segment at Phe218–Leu240 threads the bilayer. Tyr224 and Trp231 together coordinate hexacosanoate. Fumonisin B1 is bound at residue Trp231. Residue Trp231 participates in hexacosanoyl-CoA binding. The Cytoplasmic segment spans residues Gln241–His249. A helical transmembrane segment spans residues Asn250–Val268. His255 contributes to the fumonisin B1 binding site. Hexacosanoate contacts are provided by His255, Thr259, Leu262, Ile263, Ser265, Ser266, Phe269, Phe271, Met274, Gly275, Ile278, Tyr279, Met282, Asp283, and Asp286. 3 residues coordinate hexacosanoyl-CoA: His255, Thr259, and Leu262. 2 residues coordinate hexacosanoyl-CoA: Ser265 and Ser266. The Lumenal segment spans residues Phe269–Lys273. Positions 271, 274, 275, 278, 279, and 282 each coordinate hexacosanoyl-CoA. The helical transmembrane segment at Met274–Leu295 threads the bilayer. The fumonisin B1 site is built by Asp286, Leu289, Lys293, Asn296, Tyr297, Ala303, Phe304, Phe307, and Trp314. The hexacosanoyl-CoA site is built by Asp286, Leu289, Lys293, and Asn296. Over Asn296–Phe305 the chain is Cytoplasmic. A helical membrane pass occupies residues Ser306–Arg334. Phe307 serves as a coordination point for hexacosanoyl-CoA. Hexacosanoate-binding residues include Arg318, Phe343, Tyr348, Ile352, Ser353, Ile356, Val357, Leu360, Ile361, and Trp371. Arg318 serves as a coordination point for hexacosanoyl-CoA. The Lumenal portion of the chain corresponds to Thr335–Ser353. Residues Tyr348, Ile352, Ser353, Ile356, Val357, and Leu360 each coordinate hexacosanoyl-CoA. A helical transmembrane segment spans residues Leu354–Ile382. Residues Trp371, Ile375, Val378, Ile382, and Arg385 each contribute to the fumonisin B1 site. Residue Trp371 participates in hexacosanoyl-CoA binding. Residues Leu383–Ile418 lie on the Cytoplasmic side of the membrane. Residues Asp390 to Ile418 are disordered.

The protein belongs to the sphingosine N-acyltransferase family. Component of the ceramide synthase complex composed of at least LAC1, LAG1 and LIP1. Forms a heterotetrameric complex, where one unit of the LIP1 homodimer interacts with LAC1 and the other with either LAC1 or LAG1. Phosphorylated; phosphorylation is induced upon disruption of sphingolipid synthesis. Phosphorylation is inhibited by exogenous addition of phytosphingosine.

Its subcellular location is the endoplasmic reticulum membrane. It catalyses the reaction a very long-chain fatty acyl-CoA + a sphingoid base = an N-(very-long-chain fatty acyl)-sphingoid base + CoA + H(+). The enzyme catalyses hexacosanoyl-CoA + sphinganine = N-hexacosanoylsphinganine + CoA + H(+). The catalysed reaction is eicosanoyl-CoA + sphinganine = N-eicosanoylsphinganine + CoA + H(+). It carries out the reaction a fatty acyl-CoA + sphinganine = an N-acylsphinganine + CoA + H(+). It catalyses the reaction (4R)-hydroxysphinganine + a fatty acyl-CoA = an N-acyl-(4R)-4-hydroxysphinganine + CoA + H(+). Its pathway is lipid metabolism; sphingolipid metabolism. Its activity is regulated as follows. As part of the ceramide synthase complex, inhibited by the sphinganine analog mycotoxin, fumonisin B1 (FB1). Activated by ACB1, as part of the ceramide synthase complex. Functionally, component of the ceramide synthase complex that catalyzes the transfer of the acyl chain from acyl-CoA to a sphingoid base, with high selectivity toward hexacosanoyl-CoA (C26:0-CoA). N-acylates sphinganine and phytosphingosine bases to form dihydroceramides and phytoceramides, respectively. Redundant with LAG1. Facilitates ER-to-Golgi transport of GPI-anchored proteins. Has a lower affinity for phytosphingosine (PHS) than dihydrosphingosine (DHS); PHS is required for the synthesis of phytoceramides and the formation of nuclear envelopes. Along with LAG1, plays a role in pheromone-induced MAP kinase-activation of mating and formation of diploid cells. May also play a role, together with LAG1, in the polarized membrane distribution of phosphatidylinositol 4,5 biphosphate required for STE5 localization to the plasma membrane. The polypeptide is Ceramide synthase LAC1 (LAC1) (Saccharomyces cerevisiae (strain ATCC 204508 / S288c) (Baker's yeast)).